Consider the following 413-residue polypeptide: Protein cycle (413 aa).

The interval 1–43 (MEVQEFCENMEEIEDENYDEEKSARTSDENRKQNHSEIEKRRR) is disordered. Positions 8–19 (ENMEEIEDENYD) are enriched in acidic residues. The segment covering 20 to 41 (EEKSARTSDENRKQNHSEIEKR) has biased composition (basic and acidic residues). Positions 30–83 (NRKQNHSEIEKRRRDKMNTYINELSSMIPMCFAMQRKLDKLTVLRMAVQHLRGI) constitute a bHLH domain. A PAS 1 domain is found at 104–175 (DQELKMIILQ…EQLSSLEQCP (72 aa)). Positions 219-242 (NQIKEESDTSSSSRSSTKRKSRLT) are disordered. A PAS 2 domain is found at 297–367 (PASLDNHPNI…ESHKMVMQVP (71 aa)). Positions 372 to 413 (TQVYRFRCKDNSYIQLQSEWRAFKNPWTSEIDYIIAKNSVFL) constitute a PAC domain.

Efficient DNA binding requires dimerization with another bHLH protein. Forms a heterodimer with Clock in order to activate PER and TIM transcription. In terms of tissue distribution, expressed in head and ovary.

The protein resides in the nucleus. Functionally, putative transcription factor involved in the generation of biological rhythms. Activates cycling transcription of Period (PER) and Timeless (TIM) by binding to the E-box (5'-CACGTG-3') present in their promoters. In Drosophila melanogaster (Fruit fly), this protein is Protein cycle (cyc).